A 214-amino-acid polypeptide reads, in one-letter code: Ependymin (214 aa).

The N-terminal stretch at 1–20 (MHTVKLLCVVFSCLCAVAWA) is a signal peptide. Residues N70 and N93 are each glycosylated (N-linked (GlcNAc...) asparagine).

Belongs to the ependymin family. Forms disulfide-linked dimers. Post-translationally, binds calcium through the terminal sialic acids.

The protein resides in the secreted. Functionally, may play a role in neural plasticity. May be involved during axon regeneration. The protein is Ependymin (epd) of Notemigonus crysoleucas (Golden shiner).